Here is a 446-residue protein sequence, read N- to C-terminus: Dimethylsulfoniopropionate lyase DddP (446 aa).

The segment covering 1–13 (MNQHYSETRKIDP) has biased composition (basic and acidic residues). The interval 1–30 (MNQHYSETRKIDPSRGATLGDNTPNDNNRI) is disordered. Asp-295, Asp-297, Asp-307, His-371, Glu-406, and Glu-421 together coordinate a divalent metal cation.

It belongs to the peptidase M24B family. Homodimer. The cofactor is a divalent metal cation.

It carries out the reaction S,S-dimethyl-beta-propiothetin = acrylate + dimethyl sulfide + H(+). In terms of biological role, able to cleave dimethylsulfoniopropionate (DMSP), releasing dimethyl sulfide (DMS). DMS is the principal form by which sulfur is transported from oceans to the atmosphere. The real activity of the protein is however subject to debate and it is unclear whether it constitutes a real dimethylsulfoniopropionate lyase in vivo: the low activity with DMSP as substrate suggests that DMSP is not its native substrate. The protein is Dimethylsulfoniopropionate lyase DddP of Roseovarius nubinhibens (strain ATCC BAA-591 / DSM 15170 / ISM).